Consider the following 1080-residue polypeptide: Adenylate cyclase type 7 (1080 aa).

Residues 1–33 (MPAKGRYFLNEGEEGPDQDALYEKYQLTSQHGP) are Cytoplasmic-facing. Transmembrane regions (helical) follow at residues 34–54 (LLLTLLLVAATACVALIIIAF), 63–83 (QAILGMAFLVLAVFAALSVLM), 95–117 (ALALLTWACLVALGYVLVFDAWT), 122–142 (AWEQVPFFLFIVFVVYTLLPF), 147–167 (AVAVGAVSTASHLLVLGSLMG), and 176–196 (VGLQLLANAVIFLCGNLTGAF). At 197 to 594 (HKHQMQDASR…YRLAPIPRAR (398 aa)) the chain is on the cytoplasmic side. The region spanning 279-406 (SILYADIVGF…HDVSLANRME (128 aa)) is the Guanylate cyclase 1 domain. The Mg(2+) site is built by Asp-284, Ile-285, and Asp-328. Residues 284 to 289 (DIVGFT), 326 to 328 (LGD), and Arg-372 contribute to the ATP site. The segment at 454-474 (DPRSQQPPPPSQHLPRPKGDA) is disordered. The segment at 477–482 (KMRASV) is mediates regulation of adenylate cyclase activity by C5 alpha-induced G- beta and gamma pathway. The tract at residues 491–499 (WGAARPFAH) is mediates regulation of adenylate cyclase activity by sphingosine 1-phosphate-induced G alpha 13 pathway. The disordered stretch occupies residues 504-546 (ESVSSGETHVPNGRRPKSVPQRHRRTPDRSMSPKGRSEDDSYD). The modulates adenylate cyclase activity by modulating the binding of G(s)alpha to the high-affinity G(s)alpha binding site in 7C1a/7C2 stretch occupies residues 506-584 (VSSGETHVPN…IFLEKGFERE (79 aa)). Basic residues predominate over residues 515–529 (NGRRPKSVPQRHRRT). A run of 3 helical transmembrane segments spans residues 595 to 615 (HDFACASLIFVCILLVHVLLM), 620 to 640 (ALGVSFGLVACVLGLVLGLCF), and 669 to 688 (LTLAVLTIGSLLTVAIINLP). An N-linked (GlcNAc...) asparagine glycan is attached at Asn-701. A run of 2 helical transmembrane segments spans residues 718–737 (PLPYYTCSCVLGFIACSVFL) and 746–773 (VLLTVALVAYLVLFNLSPCWQWDCCGQG). Residues Asn-776 and Asn-781 are each glycosylated (N-linked (GlcNAc...) asparagine). Residues 794–814 (DLKTMTNFYLVLFYITLLTLS) traverse the membrane as a helical segment. The Cytoplasmic segment spans residues 815–1080 (RQIDYYCRLD…TAKFQGLGLN (266 aa)). Residues 879-1023 (CVMFASVPDF…NTVNVASRME (145 aa)) enclose the Guanylate cyclase 2 domain. ATP contacts are provided by residues Lys-931, 1010-1012 (DIW), 1017-1021 (NVASR), and Lys-1057.

This sequence belongs to the adenylyl cyclase class-4/guanylyl cyclase family. Requires Mg(2+) as cofactor. The cofactor is Mn(2+). Phosphorylated by PRKCD.

It localises to the membrane. It carries out the reaction ATP = 3',5'-cyclic AMP + diphosphate. Activated by the G protein alpha subunit. Activated by the G protein beta and gamma subunit complex. Activated by GNA13 and GNA12. Ethanol and phorbol 12,13-dibutanoate significantly potentiate adenylate cyclase activity generated in response to the activation of the prostanoid receptor by the agonist prostaglandin E1(1-) in a PKC-dependent manner. Inhibited by lithium. In terms of biological role, catalyzes the formation of cAMP in response to activation of G protein-coupled receptors. Functions in signaling cascades activated namely by thrombin and sphingosine 1-phosphate and mediates regulation of cAMP synthesis through synergistic action of the stimulatory G alpha protein with GNA13. Also, during inflammation, mediates zymosan-induced increase intracellular cAMP, leading to protein kinase A pathway activation in order to modulate innate immune responses through heterotrimeric G proteins G(12/13). Functions in signaling cascades activated namely by dopamine and C5 alpha chain and mediates regulation of cAMP synthesis through synergistic action of the stimulatory G protein with G beta:gamma complex. Functions, through cAMP response regulation, to keep inflammation under control during bacterial infection by sensing the presence of serum factors, such as the bioactive lysophospholipid (LPA) that regulate LPS-induced TNF-alpha production. However, it is also required for the optimal functions of B and T cells during adaptive immune responses by regulating cAMP synthesis in both B and T cells. The sequence is that of Adenylate cyclase type 7 from Homo sapiens (Human).